The sequence spans 307 residues: Ribosomal RNA small subunit methyltransferase H (307 aa).

S-adenosyl-L-methionine-binding positions include 32–34 (GGH), aspartate 52, phenylalanine 78, aspartate 100, and glutamine 107.

This sequence belongs to the methyltransferase superfamily. RsmH family.

It is found in the cytoplasm. The enzyme catalyses cytidine(1402) in 16S rRNA + S-adenosyl-L-methionine = N(4)-methylcytidine(1402) in 16S rRNA + S-adenosyl-L-homocysteine + H(+). In terms of biological role, specifically methylates the N4 position of cytidine in position 1402 (C1402) of 16S rRNA. The polypeptide is Ribosomal RNA small subunit methyltransferase H (Coxiella burnetii (strain Dugway 5J108-111)).